Here is a 79-residue protein sequence, read N- to C-terminus: Acyl carrier protein (79 aa).

Residues 1 to 77 (MNNVEKKIKK…KSIDYINNKN (77 aa)) form the Carrier domain. S37 is modified (O-(pantetheine 4'-phosphoryl)serine).

The protein belongs to the acyl carrier protein (ACP) family. In terms of processing, 4'-phosphopantetheine is transferred from CoA to a specific serine of apo-ACP by AcpS. This modification is essential for activity because fatty acids are bound in thioester linkage to the sulfhydryl of the prosthetic group.

It is found in the cytoplasm. It functions in the pathway lipid metabolism; fatty acid biosynthesis. Functionally, carrier of the growing fatty acid chain in fatty acid biosynthesis. The protein is Acyl carrier protein of Buchnera aphidicola subsp. Schizaphis graminum (strain Sg).